Consider the following 442-residue polypeptide: Ribosome biogenesis protein NOP53 (442 aa).

The tract at residues 242-264 is disordered; that stretch reads KPSSNTNLKKIEDKTPRQAQKSV.

It belongs to the NOP53 family.

The protein localises to the nucleus. The protein resides in the nucleolus. It is found in the nucleoplasm. Functionally, may play a role in ribosome biogenesis. In Arabidopsis thaliana (Mouse-ear cress), this protein is Ribosome biogenesis protein NOP53.